The sequence spans 373 residues: 4-hydroxy-3-methylbut-2-en-1-yl diphosphate synthase (flavodoxin) (373 aa).

4 residues coordinate [4Fe-4S] cluster: Cys-270, Cys-273, Cys-305, and Glu-312.

This sequence belongs to the IspG family. The cofactor is [4Fe-4S] cluster.

The enzyme catalyses (2E)-4-hydroxy-3-methylbut-2-enyl diphosphate + oxidized [flavodoxin] + H2O + 2 H(+) = 2-C-methyl-D-erythritol 2,4-cyclic diphosphate + reduced [flavodoxin]. Its pathway is isoprenoid biosynthesis; isopentenyl diphosphate biosynthesis via DXP pathway; isopentenyl diphosphate from 1-deoxy-D-xylulose 5-phosphate: step 5/6. Functionally, converts 2C-methyl-D-erythritol 2,4-cyclodiphosphate (ME-2,4cPP) into 1-hydroxy-2-methyl-2-(E)-butenyl 4-diphosphate. This chain is 4-hydroxy-3-methylbut-2-en-1-yl diphosphate synthase (flavodoxin), found in Klebsiella pneumoniae subsp. pneumoniae (strain ATCC 700721 / MGH 78578).